We begin with the raw amino-acid sequence, 151 residues long: Superoxide dismutase [Cu-Zn] A (151 aa).

Cys-6 carries the S-palmitoyl cysteine lipid modification. Cu cation is bound by residues His-45, His-47, and His-62. An intrachain disulfide couples Cys-56 to Cys-144. Residues His-62, His-70, His-79, and Asp-82 each coordinate Zn(2+). Cu cation is bound at residue His-118.

The protein belongs to the Cu-Zn superoxide dismutase family. In terms of assembly, homodimer, and heterodimer of Superoxide dismutase [Cu-Zn] A and B. Cu cation serves as cofactor. The cofactor is Zn(2+).

The protein resides in the cytoplasm. It localises to the nucleus. It catalyses the reaction 2 superoxide + 2 H(+) = H2O2 + O2. Functionally, destroys radicals which are normally produced within the cells and which are toxic to biological systems. This is Superoxide dismutase [Cu-Zn] A (sod1-a) from Xenopus laevis (African clawed frog).